The chain runs to 138 residues: Large ribosomal subunit protein uL16c (138 aa).

It belongs to the universal ribosomal protein uL16 family. In terms of assembly, part of the 50S ribosomal subunit.

It localises to the plastid. Its subcellular location is the chloroplast. This Emiliania huxleyi (Coccolithophore) protein is Large ribosomal subunit protein uL16c.